Reading from the N-terminus, the 636-residue chain is 1-deoxy-D-xylulose-5-phosphate synthase (636 aa).

Thiamine diphosphate-binding positions include His73 and 114-116 (SHA). Asp146 contributes to the Mg(2+) binding site. Thiamine diphosphate-binding positions include 147 to 148 (GA), Asn176, Tyr287, and Glu368. Residue Asn176 participates in Mg(2+) binding.

The protein belongs to the transketolase family. DXPS subfamily. As to quaternary structure, homodimer. Mg(2+) is required as a cofactor. Thiamine diphosphate serves as cofactor.

The catalysed reaction is D-glyceraldehyde 3-phosphate + pyruvate + H(+) = 1-deoxy-D-xylulose 5-phosphate + CO2. The protein operates within metabolic intermediate biosynthesis; 1-deoxy-D-xylulose 5-phosphate biosynthesis; 1-deoxy-D-xylulose 5-phosphate from D-glyceraldehyde 3-phosphate and pyruvate: step 1/1. Functionally, catalyzes the acyloin condensation reaction between C atoms 2 and 3 of pyruvate and glyceraldehyde 3-phosphate to yield 1-deoxy-D-xylulose-5-phosphate (DXP). This is 1-deoxy-D-xylulose-5-phosphate synthase from Corynebacterium glutamicum (strain ATCC 13032 / DSM 20300 / JCM 1318 / BCRC 11384 / CCUG 27702 / LMG 3730 / NBRC 12168 / NCIMB 10025 / NRRL B-2784 / 534).